The following is a 119-amino-acid chain: Large ribosomal subunit protein uL18 (119 aa).

The protein belongs to the universal ribosomal protein uL18 family. Part of the 50S ribosomal subunit; part of the 5S rRNA/L5/L18/L25 subcomplex. Contacts the 5S and 23S rRNAs.

Functionally, this is one of the proteins that bind and probably mediate the attachment of the 5S RNA into the large ribosomal subunit, where it forms part of the central protuberance. The sequence is that of Large ribosomal subunit protein uL18 from Clostridium tetani (strain Massachusetts / E88).